The chain runs to 143 residues: Small ribosomal subunit protein uS12 (143 aa).

Residue P62 is modified to Hydroxyproline.

This sequence belongs to the universal ribosomal protein uS12 family. As to quaternary structure, component of the 40S small ribosomal subunit.

It is found in the cytoplasm. The protein localises to the cytosol. Its subcellular location is the rough endoplasmic reticulum. This Ciona intestinalis (Transparent sea squirt) protein is Small ribosomal subunit protein uS12 (RPS23).